The chain runs to 478 residues: UDP-N-acetylmuramate--L-alanine ligase (478 aa).

Residue 126–132 participates in ATP binding; the sequence is GTHGKTT.

Belongs to the MurCDEF family.

The protein localises to the cytoplasm. It carries out the reaction UDP-N-acetyl-alpha-D-muramate + L-alanine + ATP = UDP-N-acetyl-alpha-D-muramoyl-L-alanine + ADP + phosphate + H(+). It functions in the pathway cell wall biogenesis; peptidoglycan biosynthesis. Its function is as follows. Cell wall formation. The sequence is that of UDP-N-acetylmuramate--L-alanine ligase from Synechococcus sp. (strain JA-2-3B'a(2-13)) (Cyanobacteria bacterium Yellowstone B-Prime).